The primary structure comprises 477 residues: Bile acid transporter (477 aa).

15 helical membrane passes run 13–33 (FVPF…TAVL), 50–70 (WISL…GKLG), 83–103 (IVIF…IFML), 107–127 (FIVG…IVTE), 139–159 (LYML…GLIM), 166–186 (VMMW…TFSI), 206–226 (LVVV…NIGW), 228–248 (STAF…LVMV), 272–292 (LILF…IVFV), 301–321 (IISS…SVII), 333–353 (VLTF…LFKA), 359–379 (IFAA…TIFM), 381–401 (VALS…YGLF), 406–426 (APFG…ANIA), and 444–464 (ISSI…GIIL).

Belongs to the major facilitator superfamily.

It localises to the cell membrane. It functions in the pathway lipid metabolism; bile acid degradation. This chain is Bile acid transporter (baiG), found in Clostridium scindens (strain JCM 10418 / VPI 12708).